A 474-amino-acid polypeptide reads, in one-letter code: tRNA-2-methylthio-N(6)-dimethylallyladenosine synthase (474 aa).

The region spanning 3-120 (KKLLIKTWGC…LPQMIKDSQS (118 aa)) is the MTTase N-terminal domain. The [4Fe-4S] cluster site is built by Cys12, Cys49, Cys83, Cys157, Cys161, and Cys164. The 233-residue stretch at 143–375 (RADGVTAFVS…QQQINTQAMR (233 aa)) folds into the Radical SAM core domain. A TRAM domain is found at 378–441 (RQMLNTEQRI…TNSLRGELVR (64 aa)).

Belongs to the methylthiotransferase family. MiaB subfamily. Monomer. It depends on [4Fe-4S] cluster as a cofactor.

Its subcellular location is the cytoplasm. The catalysed reaction is N(6)-dimethylallyladenosine(37) in tRNA + (sulfur carrier)-SH + AH2 + 2 S-adenosyl-L-methionine = 2-methylsulfanyl-N(6)-dimethylallyladenosine(37) in tRNA + (sulfur carrier)-H + 5'-deoxyadenosine + L-methionine + A + S-adenosyl-L-homocysteine + 2 H(+). Functionally, catalyzes the methylthiolation of N6-(dimethylallyl)adenosine (i(6)A), leading to the formation of 2-methylthio-N6-(dimethylallyl)adenosine (ms(2)i(6)A) at position 37 in tRNAs that read codons beginning with uridine. The sequence is that of tRNA-2-methylthio-N(6)-dimethylallyladenosine synthase from Photobacterium profundum (strain SS9).